The following is a 359-amino-acid chain: Fructose-bisphosphate aldolase, cytoplasmic isozyme (359 aa).

Substrate contacts are provided by Arg-52 and Lys-142. Catalysis depends on Glu-184, which acts as the Proton acceptor. Residue Lys-226 is the Schiff-base intermediate with dihydroxyacetone-P of the active site.

The protein belongs to the class I fructose-bisphosphate aldolase family.

The protein resides in the cytoplasm. The enzyme catalyses beta-D-fructose 1,6-bisphosphate = D-glyceraldehyde 3-phosphate + dihydroxyacetone phosphate. It functions in the pathway carbohydrate degradation; glycolysis; D-glyceraldehyde 3-phosphate and glycerone phosphate from D-glucose: step 4/4. This chain is Fructose-bisphosphate aldolase, cytoplasmic isozyme (ALDC), found in Cicer arietinum (Chickpea).